We begin with the raw amino-acid sequence, 187 residues long: 1,6-anhydro-N-acetylmuramyl-L-alanine amidase AmpD (187 aa).

Residues 29–167 enclose the N-acetylmuramoyl-L-alanine amidase domain; the sequence is TLLVVHNISL…APERKTDPGP (139 aa). H34 contacts Zn(2+). The active-site Proton acceptor is the E116. Residues H154 and D164 each contribute to the Zn(2+) site.

Belongs to the N-acetylmuramoyl-L-alanine amidase 2 family. Requires Zn(2+) as cofactor.

It is found in the cytoplasm. The catalysed reaction is Hydrolyzes the link between N-acetylmuramoyl residues and L-amino acid residues in certain cell-wall glycopeptides.. In terms of biological role, involved in cell wall peptidoglycan recycling. Specifically cleaves the amide bond between the lactyl group of N-acetylmuramic acid and the alpha-amino group of the L-alanine in degradation products containing an anhydro N-acetylmuramyl moiety. The protein is 1,6-anhydro-N-acetylmuramyl-L-alanine amidase AmpD of Enterobacter cloacae.